Reading from the N-terminus, the 44-residue chain is Thymosin beta-4 (44 aa).

The segment covering 1–25 (MADKPDMAEIEKFDKSKLKKTETQE) has biased composition (basic and acidic residues). Residues 1–44 (MADKPDMAEIEKFDKSKLKKTETQEKNPLPSKETIEQEKQAGES) are disordered. Position 2 is an N-acetylalanine (A2). Position 4 is an N6-acetyllysine (K4). At K12 the chain carries N6-acetyllysine; alternate. Residue K12 forms a Glycyl lysine isopeptide (Lys-Gly) (interchain with G-Cter in SUMO2); alternate linkage. The residue at position 23 (T23) is a Phosphothreonine. K26 bears the N6-acetyllysine mark. Residue S31 is modified to Phosphoserine. The residue at position 32 (K32) is an N6-acetyllysine. Over residues 33 to 44 (ETIEQEKQAGES) the composition is skewed to basic and acidic residues. At T34 the chain carries Phosphothreonine. K39 carries the post-translational modification N6-acetyllysine.

Belongs to the thymosin beta family. As to expression, originally found in thymus but it is widely distributed in many tissues.

The protein localises to the cytoplasm. It is found in the cytoskeleton. Functionally, plays an important role in the organization of the cytoskeleton. Binds to and sequesters actin monomers (G actin) and therefore inhibits actin polymerization. Its function is as follows. Seraspenide inhibits the entry of hematopoietic pluripotent stem cells into the S-phase. This is Thymosin beta-4 (TMSB4) from Oryctolagus cuniculus (Rabbit).